Here is a 355-residue protein sequence, read N- to C-terminus: Probable dual-specificity RNA methyltransferase RlmN (355 aa).

The Proton acceptor role is filled by Glu89. The 228-residue stretch at 95 to 322 (YENRKTVCLS…KRLGVPTSIR (228 aa)) folds into the Radical SAM core domain. Cys102 and Cys333 are joined by a disulfide. 3 residues coordinate [4Fe-4S] cluster: Cys109, Cys113, and Cys116. S-adenosyl-L-methionine is bound by residues 159-160 (GE), Ser191, 214-216 (SLH), and Asn290. Cys333 serves as the catalytic S-methylcysteine intermediate.

Belongs to the radical SAM superfamily. RlmN family. [4Fe-4S] cluster is required as a cofactor.

Its subcellular location is the cytoplasm. It carries out the reaction adenosine(2503) in 23S rRNA + 2 reduced [2Fe-2S]-[ferredoxin] + 2 S-adenosyl-L-methionine = 2-methyladenosine(2503) in 23S rRNA + 5'-deoxyadenosine + L-methionine + 2 oxidized [2Fe-2S]-[ferredoxin] + S-adenosyl-L-homocysteine. It catalyses the reaction adenosine(37) in tRNA + 2 reduced [2Fe-2S]-[ferredoxin] + 2 S-adenosyl-L-methionine = 2-methyladenosine(37) in tRNA + 5'-deoxyadenosine + L-methionine + 2 oxidized [2Fe-2S]-[ferredoxin] + S-adenosyl-L-homocysteine. In terms of biological role, specifically methylates position 2 of adenine 2503 in 23S rRNA and position 2 of adenine 37 in tRNAs. The chain is Probable dual-specificity RNA methyltransferase RlmN from Thermus thermophilus (strain ATCC BAA-163 / DSM 7039 / HB27).